A 264-amino-acid chain; its full sequence is Apolipoprotein A-I (264 aa).

An N-terminal signal peptide occupies residues 1-18 (MKAVVLTVAVLFLTGSQA). 2 tandem repeats follow at residues 67–88 (LKLL…EQIG) and 89–110 (PVSQ…QEMN). The interval 67–264 (LKLLDNWDSL…DEATKKLNTQ (198 aa)) is 10 X approximate tandem repeats. Methionine 109 carries the methionine sulfoxide modification. One copy of the 3; half-length repeat lies at 111-121 (KDLEEVKRKVQ). 3 tandem repeats follow at residues 122–143 (PYLD…QQVE), 144–165 (PLSK…EKLS), and 166–187 (PLGQ…THLA). Residues 188 to 207 (PYSDELRQRLAARLEALKEG) form a 7; truncated repeat. Repeat 8 spans residues 208–229 (SSFAEYQAKATEHLSALGEKAK). One copy of the 9; half-length repeat lies at 230–240 (PALEDLRQGLL). Copy 10 of the repeat occupies 241–264 (PVLESLKLSFWSAVDEATKKLNTQ).

This sequence belongs to the apolipoprotein A1/A4/E family. Homodimer. Interacts with APOA1BP and CLU. Component of a sperm activating protein complex (SPAP), consisting of APOA1, an immunoglobulin heavy chain, an immunoglobulin light chain and albumin. Interacts with NDRG1. Interacts with SCGB3A2. Interacts with NAXE and YJEFN3. In terms of processing, glycosylated. Palmitoylated. Post-translationally, phosphorylation sites are present in the extracellular medium.

Its subcellular location is the secreted. Functionally, participates in the reverse transport of cholesterol from tissues to the liver for excretion by promoting cholesterol efflux from tissues and by acting as a cofactor for the lecithin cholesterol acyltransferase (LCAT). As part of the SPAP complex, activates spermatozoa motility. The polypeptide is Apolipoprotein A-I (APOA1) (Ictidomys tridecemlineatus (Thirteen-lined ground squirrel)).